Here is a 78-residue protein sequence, read N- to C-terminus: Small ribosomal subunit protein bS18 (78 aa).

Belongs to the bacterial ribosomal protein bS18 family. In terms of assembly, part of the 30S ribosomal subunit. Forms a tight heterodimer with protein bS6.

Functionally, binds as a heterodimer with protein bS6 to the central domain of the 16S rRNA, where it helps stabilize the platform of the 30S subunit. This chain is Small ribosomal subunit protein bS18, found in Geobacillus kaustophilus (strain HTA426).